The primary structure comprises 454 residues: Adenylosuccinate synthetase isozyme 1 B (454 aa).

Positions 1-24 (MSGTRASNDRSSHPGAGGHKRPRY) are disordered. GTP contacts are provided by residues 39–45 (GDEGKGK) and 67–69 (GHT). Residue aspartate 40 is the Proton acceptor of the active site. Mg(2+) contacts are provided by aspartate 40 and glycine 67. Aspartate 40 contacts substrate. Residues 40–43 (DEGK), 65–68 (NAGH), threonine 160, arginine 174, asparagine 253, threonine 268, and arginine 332 each bind IMP. The active-site Proton donor is the histidine 68. Residue 328 to 334 (VTTGRKR) coordinates substrate. GTP contacts are provided by residues arginine 334, 360–362 (KLD), and 442–445 (GVGK).

This sequence belongs to the adenylosuccinate synthetase family. In terms of assembly, homodimer. Requires Mg(2+) as cofactor.

Its subcellular location is the cytoplasm. It carries out the reaction IMP + L-aspartate + GTP = N(6)-(1,2-dicarboxyethyl)-AMP + GDP + phosphate + 2 H(+). It functions in the pathway purine metabolism; AMP biosynthesis via de novo pathway; AMP from IMP: step 1/2. Component of the purine nucleotide cycle (PNC), which interconverts IMP and AMP to regulate the nucleotide levels in various tissues, and which contributes to glycolysis and ammoniagenesis. Catalyzes the first committed step in the biosynthesis of AMP from IMP. The sequence is that of Adenylosuccinate synthetase isozyme 1 B (adss1-b) from Xenopus laevis (African clawed frog).